Here is a 224-residue protein sequence, read N- to C-terminus: Small ribosomal subunit protein uS3 (224 aa).

The KH type-2 domain occupies 38 to 106; the sequence is LREFVKEKLG…EVYLNVVEVR (69 aa).

Belongs to the universal ribosomal protein uS3 family. Part of the 30S ribosomal subunit. Forms a tight complex with proteins S10 and S14.

Its function is as follows. Binds the lower part of the 30S subunit head. Binds mRNA in the 70S ribosome, positioning it for translation. In Anaeromyxobacter dehalogenans (strain 2CP-1 / ATCC BAA-258), this protein is Small ribosomal subunit protein uS3.